The following is a 225-amino-acid chain: Ethylene-responsive transcription factor 3 (225 aa).

Residues 1-12 (MRRGRAAAAPAP) show a composition bias toward low complexity. Disordered regions lie at residues 1-29 (MRRGRAAAAPAPVTGEPNGSGGSKEIRFR) and 82-193 (NFPL…NIAS). The AP2/ERF DNA-binding region spans 27-84 (RFRGVRKRPWGRFAAEIRDPWKKTRVWLGTFDSAEDAARAYDAAARALRGPKAKTNFP). The segment covering 118 to 134 (SQRPTSSSMSSTVESFS) has biased composition (low complexity). Residues 176–185 (DHGDCEKEND) are compositionally biased toward basic and acidic residues. The EAR-like (transcriptional repression) motif lies at 202–208 (FDLNLPP).

Belongs to the ethylene-response factor family. Class 2 subfamily.

Its subcellular location is the nucleus. Its function is as follows. Transcription factor that binds to the GCC-box pathogenesis-related promoter element. Involved in the regulation of gene expression by stress factors and by components of stress signal transduction pathways. Probably acts as a transcriptional repressor and may regulate other AtERFs. This chain is Ethylene-responsive transcription factor 3 (ERF3), found in Nicotiana tabacum (Common tobacco).